The chain runs to 268 residues: Early nodulin-20 (268 aa).

The signal sequence occupies residues 1 to 24; it reads MSSSSPILLMFIFSIWMLISYSES. The region spanning 25–129 is the Phytocyanin domain; that stretch reads TDYLVGDSEN…GLKLAVVVMV (105 aa). A glycan (N-linked (GlcNAc...) asparagine) is linked at Asn-67. Cys-83 and Cys-117 are disulfide-bonded. Pro residues-rich tracts occupy residues 134–145 and 160–185; these read SSPPPPPSPPTP and PSPP…TPIP. Residues 134–253 form a disordered region; sequence SSPPPPPSPP…SGSKGGGAGH (120 aa). Positions 199-235 are enriched in low complexity; the sequence is PSLSKSPSPSESPSLAPSPSDSVASLAPSSSPSDESP. Ser-243 is lipidated: GPI-anchor amidated serine. A propeptide spans 244-268 (removed in mature form); it reads SGSKGGGAGHGFLEVSIAMMMFLIF.

It belongs to the early nodulin-like (ENODL) family.

The protein resides in the cell membrane. Functionally, may act as a carbohydrate transporter. The sequence is that of Early nodulin-20 from Medicago truncatula (Barrel medic).